A 258-amino-acid chain; its full sequence is Hydroxyacylglutathione hydrolase (258 aa).

Zn(2+) is bound by residues histidine 56, histidine 58, aspartate 60, histidine 61, histidine 112, aspartate 132, and histidine 170.

The protein belongs to the metallo-beta-lactamase superfamily. Glyoxalase II family. Monomer. It depends on Zn(2+) as a cofactor.

The catalysed reaction is an S-(2-hydroxyacyl)glutathione + H2O = a 2-hydroxy carboxylate + glutathione + H(+). The protein operates within secondary metabolite metabolism; methylglyoxal degradation; (R)-lactate from methylglyoxal: step 2/2. In terms of biological role, thiolesterase that catalyzes the hydrolysis of S-D-lactoyl-glutathione to form glutathione and D-lactic acid. This chain is Hydroxyacylglutathione hydrolase, found in Pseudomonas aeruginosa (strain LESB58).